The sequence spans 857 residues: DNA mismatch repair protein MutS (857 aa).

613–620 provides a ligand contact to ATP; the sequence is GPNMGGKS. The interval 797 to 820 is disordered; sequence TSLPHEQPAAHKAKDAPQVPHQSD.

The protein belongs to the DNA mismatch repair MutS family.

Functionally, this protein is involved in the repair of mismatches in DNA. It is possible that it carries out the mismatch recognition step. This protein has a weak ATPase activity. The protein is DNA mismatch repair protein MutS of Pseudomonas putida (strain ATCC 47054 / DSM 6125 / CFBP 8728 / NCIMB 11950 / KT2440).